Consider the following 229-residue polypeptide: V-type proton ATPase subunit E (229 aa).

The protein belongs to the V-ATPase E subunit family. In terms of assembly, V-ATPase is a heteromultimeric enzyme composed of a peripheral catalytic V1 complex (components A to H) attached to an integral membrane V0 proton pore complex (components: a, c, c', c'' and d).

In terms of biological role, subunit of the peripheral V1 complex of vacuolar ATPase essential for assembly or catalytic function. V-ATPase is responsible for acidifying a variety of intracellular compartments in eukaryotic cells. This Spinacia oleracea (Spinach) protein is V-type proton ATPase subunit E (VATE).